Here is a 232-residue protein sequence, read N- to C-terminus: 26S proteasome non-ATPase regulatory subunit 10 (232 aa).

ANK repeat units follow at residues 45-75, 79-108, 112-141, 144-173, 177-206, and 210-232; these read DERT…SPNT, GGWT…DPNT, SKRT…KNRK, TGSA…NINS, EGDT…DTTI, and DSKT…EFKK.

Its function is as follows. Acts as a chaperone during the assembly of the 26S proteasome, specifically of the 19S regulatory complex (RC). The sequence is that of 26S proteasome non-ATPase regulatory subunit 10 (psmD10) from Dictyostelium discoideum (Social amoeba).